Consider the following 484-residue polypeptide: Chromosomal replication initiator protein DnaA (484 aa).

Residues 1-73 are domain I, interacts with DnaA modulators; that stretch reads MQEGKNIWSL…EILTEKGHNT (73 aa). Residues 73–140 form a domain II region; it reads TINVEFINPP…EDIHTKYRNP (68 aa). The segment at 141-357 is domain III, AAA+ region; that stretch reads FLKKKYTFEN…AAVTKLKAHI (217 aa). Gly185, Gly187, Lys188, and Thr189 together coordinate ATP. The interval 358 to 484 is domain IV, binds dsDNA; it reads DLEDIEIDTS…IELMNKINKN (127 aa).

Belongs to the DnaA family. Oligomerizes as a right-handed, spiral filament on DNA at oriC.

It is found in the cytoplasm. Plays an essential role in the initiation and regulation of chromosomal replication. ATP-DnaA binds to the origin of replication (oriC) to initiate formation of the DNA replication initiation complex once per cell cycle. Binds the DnaA box (a 9 base pair repeat at the origin) and separates the double-stranded (ds)DNA. Forms a right-handed helical filament on oriC DNA; dsDNA binds to the exterior of the filament while single-stranded (ss)DNA is stabiized in the filament's interior. The ATP-DnaA-oriC complex binds and stabilizes one strand of the AT-rich DNA unwinding element (DUE), permitting loading of DNA polymerase. After initiation quickly degrades to an ADP-DnaA complex that is not apt for DNA replication. Binds acidic phospholipids. The protein is Chromosomal replication initiator protein DnaA of Borrelia turicatae (strain 91E135).